The following is a 217-amino-acid chain: Thiamine-phosphate synthase (217 aa).

4-amino-2-methyl-5-(diphosphooxymethyl)pyrimidine-binding positions include 41–45 (QYRDK) and asparagine 76. Mg(2+) contacts are provided by aspartate 77 and aspartate 96. Serine 115 serves as a coordination point for 4-amino-2-methyl-5-(diphosphooxymethyl)pyrimidine. A 2-[(2R,5Z)-2-carboxy-4-methylthiazol-5(2H)-ylidene]ethyl phosphate-binding site is contributed by 142–144 (SPS). Residue lysine 145 participates in 4-amino-2-methyl-5-(diphosphooxymethyl)pyrimidine binding. Residues glycine 172 and 192–193 (IS) each bind 2-[(2R,5Z)-2-carboxy-4-methylthiazol-5(2H)-ylidene]ethyl phosphate.

The protein belongs to the thiamine-phosphate synthase family. Requires Mg(2+) as cofactor.

The enzyme catalyses 2-[(2R,5Z)-2-carboxy-4-methylthiazol-5(2H)-ylidene]ethyl phosphate + 4-amino-2-methyl-5-(diphosphooxymethyl)pyrimidine + 2 H(+) = thiamine phosphate + CO2 + diphosphate. The catalysed reaction is 2-(2-carboxy-4-methylthiazol-5-yl)ethyl phosphate + 4-amino-2-methyl-5-(diphosphooxymethyl)pyrimidine + 2 H(+) = thiamine phosphate + CO2 + diphosphate. It catalyses the reaction 4-methyl-5-(2-phosphooxyethyl)-thiazole + 4-amino-2-methyl-5-(diphosphooxymethyl)pyrimidine + H(+) = thiamine phosphate + diphosphate. Its pathway is cofactor biosynthesis; thiamine diphosphate biosynthesis; thiamine phosphate from 4-amino-2-methyl-5-diphosphomethylpyrimidine and 4-methyl-5-(2-phosphoethyl)-thiazole: step 1/1. Functionally, condenses 4-methyl-5-(beta-hydroxyethyl)thiazole monophosphate (THZ-P) and 2-methyl-4-amino-5-hydroxymethyl pyrimidine pyrophosphate (HMP-PP) to form thiamine monophosphate (TMP). The polypeptide is Thiamine-phosphate synthase (Acidithiobacillus ferrooxidans (strain ATCC 23270 / DSM 14882 / CIP 104768 / NCIMB 8455) (Ferrobacillus ferrooxidans (strain ATCC 23270))).